The following is a 349-amino-acid chain: Methylthioribose-1-phosphate isomerase (349 aa).

Substrate is bound by residues 49 to 51 (RGA), R93, and Q201. D242 functions as the Proton donor in the catalytic mechanism. 252-253 (NK) serves as a coordination point for substrate.

It belongs to the EIF-2B alpha/beta/delta subunits family. MtnA subfamily.

The enzyme catalyses 5-(methylsulfanyl)-alpha-D-ribose 1-phosphate = 5-(methylsulfanyl)-D-ribulose 1-phosphate. The protein operates within amino-acid biosynthesis; L-methionine biosynthesis via salvage pathway; L-methionine from S-methyl-5-thio-alpha-D-ribose 1-phosphate: step 1/6. In terms of biological role, catalyzes the interconversion of methylthioribose-1-phosphate (MTR-1-P) into methylthioribulose-1-phosphate (MTRu-1-P). The protein is Methylthioribose-1-phosphate isomerase of Petrotoga mobilis (strain DSM 10674 / SJ95).